The following is a 269-amino-acid chain: 4-hydroxy-tetrahydrodipicolinate reductase (269 aa).

Residues 11-16 (GGSGRM) and Glu37 contribute to the NAD(+) site. Residue Arg38 participates in NADP(+) binding. Residues 101–103 (GTT) and 125–128 (AGNM) each bind NAD(+). Residue His158 is the Proton donor/acceptor of the active site. Position 159 (His159) interacts with (S)-2,3,4,5-tetrahydrodipicolinate. Lys162 (proton donor) is an active-site residue. A (S)-2,3,4,5-tetrahydrodipicolinate-binding site is contributed by 168-169 (GT).

The protein belongs to the DapB family.

It is found in the cytoplasm. It carries out the reaction (S)-2,3,4,5-tetrahydrodipicolinate + NAD(+) + H2O = (2S,4S)-4-hydroxy-2,3,4,5-tetrahydrodipicolinate + NADH + H(+). The enzyme catalyses (S)-2,3,4,5-tetrahydrodipicolinate + NADP(+) + H2O = (2S,4S)-4-hydroxy-2,3,4,5-tetrahydrodipicolinate + NADPH + H(+). It functions in the pathway amino-acid biosynthesis; L-lysine biosynthesis via DAP pathway; (S)-tetrahydrodipicolinate from L-aspartate: step 4/4. Catalyzes the conversion of 4-hydroxy-tetrahydrodipicolinate (HTPA) to tetrahydrodipicolinate. The sequence is that of 4-hydroxy-tetrahydrodipicolinate reductase from Dinoroseobacter shibae (strain DSM 16493 / NCIMB 14021 / DFL 12).